The sequence spans 596 residues: NADH-quinone oxidoreductase subunit C/D (596 aa).

Positions 1 to 186 (MTDLTAQEPA…SPFELTKAKQ (186 aa)) are NADH dehydrogenase I subunit C. Residues 210–596 (DFMFLNLGPN…IDFVMSDVDR (387 aa)) form an NADH dehydrogenase I subunit D region.

This sequence in the N-terminal section; belongs to the complex I 30 kDa subunit family. The protein in the C-terminal section; belongs to the complex I 49 kDa subunit family. NDH-1 is composed of 13 different subunits. Subunits NuoB, CD, E, F, and G constitute the peripheral sector of the complex.

It localises to the cell inner membrane. The catalysed reaction is a quinone + NADH + 5 H(+)(in) = a quinol + NAD(+) + 4 H(+)(out). Functionally, NDH-1 shuttles electrons from NADH, via FMN and iron-sulfur (Fe-S) centers, to quinones in the respiratory chain. The immediate electron acceptor for the enzyme in this species is believed to be ubiquinone. Couples the redox reaction to proton translocation (for every two electrons transferred, four hydrogen ions are translocated across the cytoplasmic membrane), and thus conserves the redox energy in a proton gradient. The polypeptide is NADH-quinone oxidoreductase subunit C/D (Shigella flexneri serotype 5b (strain 8401)).